A 384-amino-acid polypeptide reads, in one-letter code: S-adenosylmethionine synthase (384 aa).

His-15 provides a ligand contact to ATP. Asp-17 contacts Mg(2+). Residue Glu-43 coordinates K(+). The L-methionine site is built by Glu-56 and Gln-99. The tract at residues 99–109 is flexible loop; sequence QSPDINQGVDR. ATP is bound by residues 164 to 166, 230 to 231, Asp-239, 245 to 246, Ala-262, and Lys-266; these read DAK, RF, and RK. Residue Asp-239 participates in L-methionine binding. Position 270 (Lys-270) interacts with L-methionine.

Belongs to the AdoMet synthase family. Homotetramer; dimer of dimers. The cofactor is Mg(2+). K(+) serves as cofactor.

The protein resides in the cytoplasm. It catalyses the reaction L-methionine + ATP + H2O = S-adenosyl-L-methionine + phosphate + diphosphate. Its pathway is amino-acid biosynthesis; S-adenosyl-L-methionine biosynthesis; S-adenosyl-L-methionine from L-methionine: step 1/1. In terms of biological role, catalyzes the formation of S-adenosylmethionine (AdoMet) from methionine and ATP. The overall synthetic reaction is composed of two sequential steps, AdoMet formation and the subsequent tripolyphosphate hydrolysis which occurs prior to release of AdoMet from the enzyme. This chain is S-adenosylmethionine synthase, found in Salmonella heidelberg (strain SL476).